A 215-amino-acid polypeptide reads, in one-letter code: Phosphatidylserine decarboxylase proenzyme (215 aa).

Serine 184 (schiff-base intermediate with substrate; via pyruvic acid) is an active-site residue. The residue at position 184 (serine 184) is a Pyruvic acid (Ser); by autocatalysis.

This sequence belongs to the phosphatidylserine decarboxylase family. PSD-A subfamily. Heterodimer of a large membrane-associated beta subunit and a small pyruvoyl-containing alpha subunit. Requires pyruvate as cofactor. In terms of processing, is synthesized initially as an inactive proenzyme. Formation of the active enzyme involves a self-maturation process in which the active site pyruvoyl group is generated from an internal serine residue via an autocatalytic post-translational modification. Two non-identical subunits are generated from the proenzyme in this reaction, and the pyruvate is formed at the N-terminus of the alpha chain, which is derived from the carboxyl end of the proenzyme. The post-translation cleavage follows an unusual pathway, termed non-hydrolytic serinolysis, in which the side chain hydroxyl group of the serine supplies its oxygen atom to form the C-terminus of the beta chain, while the remainder of the serine residue undergoes an oxidative deamination to produce ammonia and the pyruvoyl prosthetic group on the alpha chain.

The protein localises to the cell membrane. The catalysed reaction is a 1,2-diacyl-sn-glycero-3-phospho-L-serine + H(+) = a 1,2-diacyl-sn-glycero-3-phosphoethanolamine + CO2. The protein operates within phospholipid metabolism; phosphatidylethanolamine biosynthesis; phosphatidylethanolamine from CDP-diacylglycerol: step 2/2. Functionally, catalyzes the formation of phosphatidylethanolamine (PtdEtn) from phosphatidylserine (PtdSer). This chain is Phosphatidylserine decarboxylase proenzyme, found in Ralstonia pickettii (strain 12J).